The following is a 330-amino-acid chain: 4-hydroxythreonine-4-phosphate dehydrogenase (330 aa).

Substrate is bound at residue threonine 133. Residues histidine 161, histidine 206, and histidine 261 each contribute to the a divalent metal cation site. 3 residues coordinate substrate: lysine 269, asparagine 278, and arginine 287.

It belongs to the PdxA family. As to quaternary structure, homodimer. It depends on Zn(2+) as a cofactor. Mg(2+) is required as a cofactor. The cofactor is Co(2+).

The protein localises to the cytoplasm. It carries out the reaction 4-(phosphooxy)-L-threonine + NAD(+) = 3-amino-2-oxopropyl phosphate + CO2 + NADH. It participates in cofactor biosynthesis; pyridoxine 5'-phosphate biosynthesis; pyridoxine 5'-phosphate from D-erythrose 4-phosphate: step 4/5. Its function is as follows. Catalyzes the NAD(P)-dependent oxidation of 4-(phosphooxy)-L-threonine (HTP) into 2-amino-3-oxo-4-(phosphooxy)butyric acid which spontaneously decarboxylates to form 3-amino-2-oxopropyl phosphate (AHAP). The protein is 4-hydroxythreonine-4-phosphate dehydrogenase of Xylella fastidiosa (strain 9a5c).